We begin with the raw amino-acid sequence, 249 residues long: Phosphonates import ATP-binding protein PhnC (249 aa).

Residues 2–246 (IEFKKVEKVW…KLNESKLEEI (245 aa)) form the ABC transporter domain. 35–42 (GLSGAGKT) contacts ATP.

This sequence belongs to the ABC transporter superfamily. Phosphonates importer (TC 3.A.1.9.1) family. The complex is composed of two ATP-binding proteins (PhnC), two transmembrane proteins (PhnE) and a solute-binding protein (PhnD).

It localises to the cell membrane. The catalysed reaction is phosphonate(out) + ATP + H2O = phosphonate(in) + ADP + phosphate + H(+). Its function is as follows. Part of the ABC transporter complex PhnCDE involved in phosphonates import. Responsible for energy coupling to the transport system. This is Phosphonates import ATP-binding protein PhnC from Mesoplasma florum (strain ATCC 33453 / NBRC 100688 / NCTC 11704 / L1) (Acholeplasma florum).